A 53-amino-acid polypeptide reads, in one-letter code: Abaecin (53 aa).

The signal sequence occupies residues 1–19; sequence MKVVIFIFALLATICAAFA.

The protein localises to the secreted. In terms of biological role, this peptide has bactericidal activity. This is Abaecin from Apis mellifera (Honeybee).